We begin with the raw amino-acid sequence, 537 residues long: MGATGAAEPLQSVLWVKQQRCAVSLEPARALLRWWRSPGPGAGAPGADACSVPVSEIIAVEETDVHGKHQGSGKWQKMEKPYAFTVHCVKRARRHRWKWAQVTFWCPEEQLCHLWLQTLREMLEKLTSRPKHLLVFINPFGGKGQGKRIYERKVAPLFTLASITTDIIVTEHANQAKETLYEINIDKYDGIVCVGGDGMFSEVLHGLIGRTQRSAGVDQNHPRAVLVPSSLRIGIIPAGSTDCVCYSTVGTSDAETSALHIVVGDSLAMDVSSVHHNSTLLRYSVSLLGYGFYGDIIKDSEKKRWLGLARYDFSGLKTFLSHHCYEGTVSFLPAQHTVGSPRDRKPCRAGCFVCRQSKQQLEEEQKKALYGLEAAEDVEEWQVVCGKFLAINATNMSCACRRSPRGLSPAAHLGDGSSDLILIRKCSRFNFLRFLIRHTNQQDQFDFTFVEVYRVKKFQFTSKHMEDEDSDLKEGGKKRFGHICSSHPSCCCTVSNSSWNCDGEVLHSPAIEVRVHCQLVRLFARGIEENPKPDSHS.

Residues 1–115 (MGATGAAEPL…CPEEQLCHLW (115 aa)) form an essential for enzyme activity region. The segment at 1–125 (MGATGAAEPL…LQTLREMLEK (125 aa)) is required for binding to sulfatide and phosphoinositides. The DAGKc domain maps to 128–278 (SRPKHLLVFI…MDVSSVHHNS (151 aa)). ATP-binding positions include 138–140 (NPF) and 170–174 (TEHAN). A substrate-binding site is contributed by 195-198 (GGDG). The active-site Proton donor/acceptor is the D197. Residues E202, 239-241 (GST), R304, and R310 contribute to the ATP site. Phosphoserine occurs at positions 340 and 408. 502 to 504 (DGE) is a binding site for ATP.

Ca(2+) serves as cofactor. Mg(2+) is required as a cofactor. As to expression, high level expression in heart, brain, skeletal muscle, kidney and liver; moderate in peripheral blood leukocytes and thymus; very low in spleen, small intestine, placenta and lung.

The protein localises to the cytoplasm. It is found in the cell membrane. The enzyme catalyses an N-acylsphing-4-enine + ATP = an N-acylsphing-4-enine 1-phosphate + ADP + H(+). The catalysed reaction is N-(hexanoyl)sphing-4-enine + ATP = N-hexanoylsphing-4-enine 1-phosphate + ADP + H(+). It catalyses the reaction N-(acetyl)-sphing-4-enine + ATP = N-(acetyl)-sphing-4-enine-1-phosphate + ADP + H(+). It carries out the reaction N-hexadecanoylsphing-4-enine + ATP = N-(hexadecanoyl)-sphing-4-enine-1-phosphate + ADP + H(+). The enzyme catalyses N-hexanoyl-(4R)-hydroxysphinganine + ATP = N-hexanoyl-(4R)-hydroxysphinganine-1-phosphate + ADP + H(+). Inhibited by sulfatide. Inhibited by sphinganine, sphingenine, and N,N-Dimethylsphingosine (DMS). Cardiolipin at 0.1 uM significantly increases activity, whereas at concentrations &gt;1 uM has an inhibitory effect. Its function is as follows. Catalyzes specifically the phosphorylation of ceramide to form ceramide 1-phosphate. Acts efficiently on natural and analog ceramides (C6, C8, C16 ceramides, and C8-dihydroceramide), to a lesser extent on C2-ceramide and C6-dihydroceramide, but not on other lipids, such as various sphingosines. Shows a greater preference for D-erythro isomer of ceramides. Binds phosphoinositides. This chain is Ceramide kinase (CERK), found in Homo sapiens (Human).